Here is a 109-residue protein sequence, read N- to C-terminus: Large ribosomal subunit protein uL22 (109 aa).

Belongs to the universal ribosomal protein uL22 family. In terms of assembly, part of the 50S ribosomal subunit.

Its function is as follows. This protein binds specifically to 23S rRNA; its binding is stimulated by other ribosomal proteins, e.g. L4, L17, and L20. It is important during the early stages of 50S assembly. It makes multiple contacts with different domains of the 23S rRNA in the assembled 50S subunit and ribosome. The globular domain of the protein is located near the polypeptide exit tunnel on the outside of the subunit, while an extended beta-hairpin is found that lines the wall of the exit tunnel in the center of the 70S ribosome. This chain is Large ribosomal subunit protein uL22, found in Dehalococcoides mccartyi (strain ATCC BAA-2266 / KCTC 15142 / 195) (Dehalococcoides ethenogenes (strain 195)).